A 172-amino-acid chain; its full sequence is 3-phenylpropionate/cinnamic acid dioxygenase subunit beta (172 aa).

This sequence belongs to the bacterial ring-hydroxylating dioxygenase beta subunit family. In terms of assembly, this dioxygenase system consists of four proteins: the two subunits of the hydroxylase component (HcaE and HcaF), a ferredoxin (HcaC) and a ferredoxin reductase (HcaD).

It catalyses the reaction 3-phenylpropanoate + NADH + O2 + H(+) = 3-(cis-5,6-dihydroxycyclohexa-1,3-dien-1-yl)propanoate + NAD(+). The catalysed reaction is (E)-cinnamate + NADH + O2 + H(+) = (2E)-3-(cis-5,6-dihydroxycyclohexa-1,3-dien-1-yl)prop-2-enoate + NAD(+). The protein operates within aromatic compound metabolism; 3-phenylpropanoate degradation. Its function is as follows. Part of the multicomponent 3-phenylpropionate dioxygenase. Converts 3-phenylpropionic acid (PP) and cinnamic acid (CI) into 3-phenylpropionate-dihydrodiol (PP-dihydrodiol) and cinnamic acid-dihydrodiol (CI-dihydrodiol), respectively. The protein is 3-phenylpropionate/cinnamic acid dioxygenase subunit beta of Escherichia coli O7:K1 (strain IAI39 / ExPEC).